A 304-amino-acid chain; its full sequence is Syntaxin-132 (304 aa).

At Met-1 the chain carries N-acetylmethionine. A disordered region spans residues 1-30 (MNDLLKGSFELPRGQSSREGDVELGEQQGG). Topologically, residues 1-275 (MNDLLKGSFE…AKSLQKNSRK (275 aa)) are cytoplasmic. Coiled-coil stretches lie at residues 34 to 67 (LEDFFKKVQVIDKQYDKLDKLLKKLQASHEESKS) and 129 to 162 (TLSLKKKLKDKMAEFQVLRENIQQEYRDVVDRRV). Residues 204-266 (LAEIQERHDA…QSGNTALQRA (63 aa)) form the t-SNARE coiled-coil homology domain. The helical; Anchor for type IV membrane protein transmembrane segment at 276–296 (WMCIAIIILLIVVAVIVVGVL) threads the bilayer. Topologically, residues 297–304 (KPWKNKSA) are vesicular.

It belongs to the syntaxin family. In terms of assembly, part of the t-SNARE complex. In terms of tissue distribution, widely expressed in all tissues throughout plant development.

The protein localises to the cell membrane. Vesicle trafficking protein that functions in the secretory pathway. Acts in coordination with SYP123 to mediate tip-focused membrane trafficking for root hair tip growth. Functions in root hair elongation by forming SNARE complexes with VAMP721,VAMP722 or VAMP724. Involved in cytokinesis. Acts as a cell plate-specific syntaxin, required for the fusion of vesicles at the plane of cell division. Required for secretory trafficking to the plasma membrane during interphase. Involved in the regulation of density of the H(+) ATPase proteins at the plasma membrane of root and shoot in epidermal cells. Modulation of SYP132 expression by auxin affects clathrin-sensitive H(+) ATPase traffic from the plasma membrane, and influences apoplastic acidification and plant growth. This is Syntaxin-132 from Arabidopsis thaliana (Mouse-ear cress).